The chain runs to 93 residues: Sec-independent protein translocase protein TatA (93 aa).

The chain crosses the membrane as a helical span at residues 1-21 (MGAMSPWHWAIVALVVVILFG). A disordered region spans residues 44 to 93 (KEMQNDNSTPAPTAQQSAPAELPVADTTTAPVTPPAPVQPQPQHTEPKSA). A compositionally biased stretch (low complexity) spans 51-74 (STPAPTAQQSAPAELPVADTTTAP).

It belongs to the TatA/E family. The Tat system comprises two distinct complexes: a TatABC complex, containing multiple copies of TatA, TatB and TatC subunits, and a separate TatA complex, containing only TatA subunits. Substrates initially bind to the TatABC complex, which probably triggers association of the separate TatA complex to form the active translocon.

The protein resides in the cell membrane. Functionally, part of the twin-arginine translocation (Tat) system that transports large folded proteins containing a characteristic twin-arginine motif in their signal peptide across membranes. TatA could form the protein-conducting channel of the Tat system. The protein is Sec-independent protein translocase protein TatA of Rhodococcus opacus (strain B4).